A 302-amino-acid chain; its full sequence is N(G),N(G)-dimethylarginine dimethylaminohydrolase (302 aa).

The substrate site is built by aspartate 102, arginine 127, and arginine 172. Histidine 201 (proton donor) is an active-site residue. The active-site Nucleophile is cysteine 295.

This sequence belongs to the DDAH family.

It carries out the reaction N(omega),N(omega)-dimethyl-L-arginine + H2O = dimethylamine + L-citrulline. It catalyses the reaction N(omega)-methyl-L-arginine + H2O = L-citrulline + methylamine. In terms of biological role, hydrolyzes N(G),N(G)-dimethyl-L-arginine (ADMA) and N(G)-monomethyl-L-arginine (MMA). This chain is N(G),N(G)-dimethylarginine dimethylaminohydrolase, found in Mycobacterium tuberculosis (strain ATCC 25618 / H37Rv).